A 236-amino-acid chain; its full sequence is MLFLSFLLVCLCEEVRMLNLMTTEVSATEFASIASKNMETDVSTSSDYLTGKSETTFSANSETWGKNVTEISIDSETYLNQSFMVTSTLAVETTDRSIGNNVNVTSSFPTVKGDETQNIETSFTVISASTFSDVSEKTPQGLSTKSTPKKTVQALWETDTVQVLEFTDTHEGDEEYFKDFLSSLVIWIGGISFIGAFVILIVILCNWYKKDKQRSLFWDEEKKPDVQMRRDVKTCR.

The signal sequence occupies residues 1–17; that stretch reads MLFLSFLLVCLCEEVRM. Residues Asn-67, Asn-80, and Asn-103 are each glycosylated (N-linked (GlcNAc...) asparagine; by host). The helical transmembrane segment at 184 to 204 threads the bilayer; sequence LVIWIGGISFIGAFVILIVIL.

Its subcellular location is the membrane. The polypeptide is Glycoprotein U23 (U23) (Human herpesvirus 6A (strain Uganda-1102) (HHV-6 variant A)).